A 585-amino-acid polypeptide reads, in one-letter code: A-type ATP synthase subunit A (585 aa).

Residue 232-239 coordinates ATP; sequence GPFGSGKT.

The protein belongs to the ATPase alpha/beta chains family. In terms of assembly, has multiple subunits with at least A(3), B(3), C, D, E, F, H, I and proteolipid K(x).

It is found in the cell membrane. It catalyses the reaction ATP + H2O + 4 H(+)(in) = ADP + phosphate + 5 H(+)(out). Functionally, component of the A-type ATP synthase that produces ATP from ADP in the presence of a proton gradient across the membrane. The A chain is the catalytic subunit. The chain is A-type ATP synthase subunit A from Methanosphaera stadtmanae (strain ATCC 43021 / DSM 3091 / JCM 11832 / MCB-3).